A 783-amino-acid polypeptide reads, in one-letter code: ATP-dependent DNA helicase Hel308 (783 aa).

ATP-binding positions include Gln-29 and 47 to 54 (VPTASGKT). Residues 34–209 (ERGVTEGANL…WLDAELVDSD (176 aa)) enclose the Helicase ATP-binding domain. The DEAH box motif lies at 154–157 (DEVH). The Helicase C-terminal domain occupies 242–443 (QTAAVVADTL…EPALRTHVLA (202 aa)). The interval 744 to 783 (ETVGHPDPGMDGVAADTDAAPESGGEAGGDEGQASLGDFS) is disordered.

Belongs to the helicase family. Hel308 subfamily. In terms of assembly, monomer.

It catalyses the reaction Couples ATP hydrolysis with the unwinding of duplex DNA by translocating in the 3'-5' direction.. It carries out the reaction ATP + H2O = ADP + phosphate + H(+). Functionally, DNA-dependent ATPase and 3'-5' DNA helicase that may be involved in repair of stalled replication forks. The sequence is that of ATP-dependent DNA helicase Hel308 from Halobacterium salinarum (strain ATCC 700922 / JCM 11081 / NRC-1) (Halobacterium halobium).